We begin with the raw amino-acid sequence, 1001 residues long: Integrator complex subunit 7 (1001 aa).

The tract at residues 980–1001 is disordered; that stretch reads DPSKQGAPAPSTSQAVGQTRRF. Residues 989-1001 are compositionally biased toward polar residues; the sequence is PSTSQAVGQTRRF.

It belongs to the Integrator subunit 7 family. In terms of assembly, belongs to the multiprotein complex Integrator, at least composed of IntS1, IntS2, IntS3, IntS4, omd/IntS5, IntS6, defl/IntS7, IntS8, IntS9, IntS10, IntS11, IntS12, asun/IntS13, IntS14 and IntS15. The core complex associates with protein phosphatase 2A subunits mts/PP2A and Pp2A-29B, to form the Integrator-PP2A (INTAC) complex.

It is found in the nucleus. It localises to the cytoplasm. In terms of biological role, component of the integrator complex, a multiprotein complex that terminates RNA polymerase II (Pol II) transcription in the promoter-proximal region of genes. The integrator complex provides a quality checkpoint during transcription elongation by driving premature transcription termination of transcripts that are unfavorably configured for transcriptional elongation: the complex terminates transcription by (1) catalyzing dephosphorylation of the C-terminal domain (CTD) of Pol II subunit Polr2A/Rbp1 and Spt5, and (2) degrading the exiting nascent RNA transcript via endonuclease activity. The integrator complex is also involved in the 3'-end processing of the U7 snRNA, and also the spliceosomal snRNAs U1, U2, U4 and U5. In Drosophila melanogaster (Fruit fly), this protein is Integrator complex subunit 7.